Consider the following 271-residue polypeptide: Pyrroline-5-carboxylate reductase (271 aa).

The protein belongs to the pyrroline-5-carboxylate reductase family.

It is found in the cytoplasm. It carries out the reaction L-proline + NADP(+) = (S)-1-pyrroline-5-carboxylate + NADPH + 2 H(+). It catalyses the reaction L-proline + NAD(+) = (S)-1-pyrroline-5-carboxylate + NADH + 2 H(+). The protein operates within amino-acid biosynthesis; L-proline biosynthesis; L-proline from L-glutamate 5-semialdehyde: step 1/1. Catalyzes the reduction of 1-pyrroline-5-carboxylate (PCA) to L-proline. This Staphylococcus epidermidis (strain ATCC 35984 / DSM 28319 / BCRC 17069 / CCUG 31568 / BM 3577 / RP62A) protein is Pyrroline-5-carboxylate reductase.